A 208-amino-acid chain; its full sequence is Small ribosomal subunit protein uS9c (208 aa).

Residues 1–52 (MASITNLASSLSSLSFSSQVSQRPNTISFPRANSVFALPAKSARRASLSITA) constitute a chloroplast transit peptide.

This sequence belongs to the universal ribosomal protein uS9 family.

Its subcellular location is the plastid. The protein localises to the chloroplast. In terms of biological role, binds directly to 16S ribosomal RNA. This is Small ribosomal subunit protein uS9c (RPS9) from Arabidopsis thaliana (Mouse-ear cress).